A 635-amino-acid chain; its full sequence is Threonine--tRNA ligase (635 aa).

The TGS domain occupies Met-1–Thr-62. A catalytic region spans residues Asp-244 to Pro-535. Residues Cys-335, His-386, and His-512 each coordinate Zn(2+).

Belongs to the class-II aminoacyl-tRNA synthetase family. As to quaternary structure, homodimer. The cofactor is Zn(2+).

It localises to the cytoplasm. The catalysed reaction is tRNA(Thr) + L-threonine + ATP = L-threonyl-tRNA(Thr) + AMP + diphosphate + H(+). Its function is as follows. Catalyzes the attachment of threonine to tRNA(Thr) in a two-step reaction: L-threonine is first activated by ATP to form Thr-AMP and then transferred to the acceptor end of tRNA(Thr). Also edits incorrectly charged L-seryl-tRNA(Thr). This Xylella fastidiosa (strain M12) protein is Threonine--tRNA ligase.